Consider the following 118-residue polypeptide: Co-chaperonin GroES (118 aa).

It belongs to the GroES chaperonin family. In terms of assembly, heptamer of 7 subunits arranged in a ring. Interacts with the chaperonin GroEL.

It is found in the cytoplasm. Its function is as follows. Together with the chaperonin GroEL, plays an essential role in assisting protein folding. The GroEL-GroES system forms a nano-cage that allows encapsulation of the non-native substrate proteins and provides a physical environment optimized to promote and accelerate protein folding. GroES binds to the apical surface of the GroEL ring, thereby capping the opening of the GroEL channel. The sequence is that of Co-chaperonin GroES from Helicobacter pylori (strain P12).